A 426-amino-acid chain; its full sequence is Tyrosine--tRNA ligase (426 aa).

Position 35 (Tyr-35) interacts with L-tyrosine. The 'HIGH' region signature appears at 40–49; that stretch reads PTADSLHIGH. L-tyrosine is bound by residues Tyr-172 and Gln-176. Residues 232–236 carry the 'KMSKS' region motif; that stretch reads KLGKS. Lys-235 contacts ATP. Residues 357 to 414 enclose the S4 RNA-binding domain; that stretch reads ENIKDILVNSKLSKSKNNAKSVILSSSIRINNKKQKSIDFMFKKEDKLFNLFTLIKKG.

This sequence belongs to the class-I aminoacyl-tRNA synthetase family. TyrS type 1 subfamily. As to quaternary structure, homodimer.

The protein localises to the cytoplasm. It carries out the reaction tRNA(Tyr) + L-tyrosine + ATP = L-tyrosyl-tRNA(Tyr) + AMP + diphosphate + H(+). Functionally, catalyzes the attachment of tyrosine to tRNA(Tyr) in a two-step reaction: tyrosine is first activated by ATP to form Tyr-AMP and then transferred to the acceptor end of tRNA(Tyr). In Wigglesworthia glossinidia brevipalpis, this protein is Tyrosine--tRNA ligase.